Reading from the N-terminus, the 305-residue chain is Protoheme IX farnesyltransferase (305 aa).

9 helical membrane passes run 31–51 (VISL…YSVH), 52–72 (PFIA…AGAI), 96–118 (VIES…FFMA), 123–145 (LLAS…IWLK), 151–171 (NIVI…AAVS), 179–199 (IILF…LALF), 225–245 (ILIY…IGMN), 247–267 (FIYL…AGSL), and 281–301 (FAYS…TNTI).

Belongs to the UbiA prenyltransferase family. Protoheme IX farnesyltransferase subfamily.

The protein localises to the cell inner membrane. It carries out the reaction heme b + (2E,6E)-farnesyl diphosphate + H2O = Fe(II)-heme o + diphosphate. Its pathway is porphyrin-containing compound metabolism; heme O biosynthesis; heme O from protoheme: step 1/1. Converts heme B (protoheme IX) to heme O by substitution of the vinyl group on carbon 2 of heme B porphyrin ring with a hydroxyethyl farnesyl side group. The protein is Protoheme IX farnesyltransferase of Rickettsia massiliae (strain Mtu5).